A 241-amino-acid polypeptide reads, in one-letter code: ATP synthase subunit a (241 aa).

5 helical membrane-spanning segments follow: residues 23 to 43, 83 to 103, 113 to 133, 188 to 208, and 209 to 229; these read VSFT…AAFF, YFPY…LGML, IAVT…IGFA, VLAG…FAVV, and LGVT…FTIL.

This sequence belongs to the ATPase A chain family. In terms of assembly, F-type ATPases have 2 components, CF(1) - the catalytic core - and CF(0) - the membrane proton channel. CF(1) has five subunits: alpha(3), beta(3), gamma(1), delta(1), epsilon(1). CF(0) has four main subunits: a, b, b' and c.

Its subcellular location is the cell inner membrane. Its function is as follows. Key component of the proton channel; it plays a direct role in the translocation of protons across the membrane. The sequence is that of ATP synthase subunit a from Rhodospirillum rubrum (strain ATCC 11170 / ATH 1.1.1 / DSM 467 / LMG 4362 / NCIMB 8255 / S1).